The chain runs to 528 residues: Negative elongation factor A (528 aa).

An HDAg domain is found at 89-248; the sequence is WVLMVADILK…TPIPPSRTLL (160 aa). The tract at residues 125-188 is NELF-C/D-binding; the sequence is REKVGECEAS…LQKSTETAQQ (64 aa). T157 is modified (phosphothreonine). Residues 189–248 are RNAPII-binding; that stretch reads LKRSAGVPFHAKGRGLLRKMDTTTPLKGIPKQAPFRSPTAPSVFSPTGNRTPIPPSRTLL. The interval 215–245 is disordered; the sequence is KGIPKQAPFRSPTAPSVFSPTGNRTPIPPSR. S225 and S233 each carry phosphoserine. A compositionally biased stretch (polar residues) spans 227–238; it reads TAPSVFSPTGNR. Residue T277 is modified to Phosphothreonine. Over residues 320 to 341 the composition is skewed to low complexity; the sequence is PSTSYLPSTPSVVPASSYIPSS. The segment at 320–409 is disordered; that stretch reads PSTSYLPSTP…PPAVAPTTQT (90 aa). S363 is modified (phosphoserine).

Belongs to the NELF-A family. The NELF complex is composed of NELFA, NELFB, NELFCD (isoform NELF-C or isoform NELF-D) and NELFE; NELFA and NELFCD form a stable subcomplex that binds to the N-terminus of NELFB. In vitro, the NELFA:NELFCD subcomplex binds to ssDNA and ssRNA in a sequence- and structure-dependent manner. Interacts with the RNA polymerase II complex when it is not phosphorylated by P-TEFb. As to expression, ubiquitous. Expressed in heart, brain, placenta, liver, skeletal muscle, kidney and pancreas. Expressed at lower level in adult lung. Expressed in fetal brain, lung, liver and kidney.

Its subcellular location is the nucleus. Essential component of the NELF complex, a complex that negatively regulates the elongation of transcription by RNA polymerase II. The NELF complex, which acts via an association with the DSIF complex and causes transcriptional pausing, is counteracted by the P-TEFb kinase complex. Functionally, (Microbial infection) The NELF complex is involved in HIV-1 latency possibly involving recruitment of PCF11 to paused RNA polymerase II. The protein is Negative elongation factor A (NELFA) of Homo sapiens (Human).